The chain runs to 128 residues: Sirohydrochlorin cobaltochelatase (128 aa).

Catalysis depends on histidine 9, which acts as the Proton acceptor. Residue histidine 9 participates in Co(2+) binding. Residues lysine 43 and 68–73 each bind substrate; that span reads FATGTH. A Co(2+)-binding site is contributed by histidine 73.

It belongs to the CbiX family. CbiXS subfamily. Homotetramer; dimer of dimers.

It carries out the reaction Co-sirohydrochlorin + 2 H(+) = sirohydrochlorin + Co(2+). Its pathway is cofactor biosynthesis; adenosylcobalamin biosynthesis; cob(II)yrinate a,c-diamide from sirohydrochlorin (anaerobic route): step 1/10. Its function is as follows. Catalyzes the insertion of Co(2+) into sirohydrochlorin as part of the anaerobic pathway to cobalamin biosynthesis. The protein is Sirohydrochlorin cobaltochelatase of Saccharolobus solfataricus (strain ATCC 35092 / DSM 1617 / JCM 11322 / P2) (Sulfolobus solfataricus).